A 287-amino-acid polypeptide reads, in one-letter code: Bifunctional protein FolD (287 aa).

NADP(+) contacts are provided by residues 166-168 (GAS) and isoleucine 232.

Belongs to the tetrahydrofolate dehydrogenase/cyclohydrolase family. Homodimer.

The catalysed reaction is (6R)-5,10-methylene-5,6,7,8-tetrahydrofolate + NADP(+) = (6R)-5,10-methenyltetrahydrofolate + NADPH. It catalyses the reaction (6R)-5,10-methenyltetrahydrofolate + H2O = (6R)-10-formyltetrahydrofolate + H(+). It functions in the pathway one-carbon metabolism; tetrahydrofolate interconversion. Catalyzes the oxidation of 5,10-methylenetetrahydrofolate to 5,10-methenyltetrahydrofolate and then the hydrolysis of 5,10-methenyltetrahydrofolate to 10-formyltetrahydrofolate. The sequence is that of Bifunctional protein FolD from Aeromonas salmonicida (strain A449).